The following is a 218-amino-acid chain: uncharacterized protein (218 aa).

This is an uncharacterized protein from Treponema pallidum (strain Nichols).